The following is a 106-amino-acid chain: Nucleoid-associated protein XOO1065 (106 aa).

Residues Lys-80–Met-89 are compositionally biased toward basic and acidic residues. The segment at Lys-80–Phe-106 is disordered.

The protein belongs to the YbaB/EbfC family. As to quaternary structure, homodimer.

The protein localises to the cytoplasm. It localises to the nucleoid. Functionally, binds to DNA and alters its conformation. May be involved in regulation of gene expression, nucleoid organization and DNA protection. The protein is Nucleoid-associated protein XOO1065 of Xanthomonas oryzae pv. oryzae (strain KACC10331 / KXO85).